We begin with the raw amino-acid sequence, 288 residues long: CBY1-interacting BAR domain-containing protein 2 (288 aa).

Positions 6-217 (SRDSQVRVME…ESYDLEKDLE (212 aa)) are BAR-like. 2 disordered regions span residues 133–157 (QKSPSDRQTISQAETSVQRASVDAS) and 256–288 (TIRSQRKEAVSEDDSAEEDPVEDLRGQAQRLNQ). Polar residues predominate over residues 138–157 (DRQTISQAETSVQRASVDAS). Acidic residues predominate over residues 266–276 (SEDDSAEEDPV).

The protein belongs to the CIBAR family. Homodimer (via BAR-like domain). Heterodimer (via BAR-like domain) with FAM92A. Interacts with CBY1.

It localises to the cytoplasm. Its subcellular location is the cytoskeleton. The protein resides in the microtubule organizing center. It is found in the centrosome. The protein localises to the centriole. It localises to the cilium basal body. Its function is as follows. May play a role in ciliogenesis. In cooperation with CBY1 may facilitate ciliogenesis likely by the recruitment and fusion of endosomal vesicles at distal appendages during early stages of ciliogenesis. This chain is CBY1-interacting BAR domain-containing protein 2 (CIBAR2), found in Bos taurus (Bovine).